Reading from the N-terminus, the 536-residue chain is Mannuronan C5-epimerase (536 aa).

The first 36 residues, 1–36 (MNSHASNGRSRNWPHALLESALLTSALLMASSVALA), serve as a signal peptide directing secretion. PbH1 repeat units lie at residues 298–320 (TRDF…DPHD), 322–345 (SHGL…IISR), 347–369 (VDNS…VLDR), 371–393 (SVGN…TLYE), and 394–416 (SGNN…RVRN). His-319 functions as the Proton acceptor in the catalytic mechanism.

This sequence belongs to the D-mannuronate C5-epimerase family.

Its subcellular location is the periplasm. It catalyses the reaction [(1-&gt;4)-beta-D-mannuronosyl](n) = [alginate](n). It functions in the pathway glycan biosynthesis; alginate biosynthesis. Catalyzes the epimerization of beta-D-mannuronate to alpha-L-guluronate during the synthesis of the linear polysaccharide alginate. In addition, is part of a periplasmic protein complex that protects alginate from degradation by AlgL by channeling the newly formed alginate polymer through a scaffold that transfers the alginate polymer through the periplasmic space to the outer membrane secretin AlgE. This chain is Mannuronan C5-epimerase (algG), found in Pseudomonas syringae pv. tomato (strain ATCC BAA-871 / DC3000).